Consider the following 416-residue polypeptide: Serine hydroxymethyltransferase (416 aa).

(6S)-5,6,7,8-tetrahydrofolate-binding positions include Leu121 and 125-127 (GHL). Residue Lys229 is modified to N6-(pyridoxal phosphate)lysine.

It belongs to the SHMT family. As to quaternary structure, homodimer. The cofactor is pyridoxal 5'-phosphate.

Its subcellular location is the cytoplasm. The enzyme catalyses (6R)-5,10-methylene-5,6,7,8-tetrahydrofolate + glycine + H2O = (6S)-5,6,7,8-tetrahydrofolate + L-serine. Its pathway is one-carbon metabolism; tetrahydrofolate interconversion. The protein operates within amino-acid biosynthesis; glycine biosynthesis; glycine from L-serine: step 1/1. In terms of biological role, catalyzes the reversible interconversion of serine and glycine with tetrahydrofolate (THF) serving as the one-carbon carrier. This reaction serves as the major source of one-carbon groups required for the biosynthesis of purines, thymidylate, methionine, and other important biomolecules. Also exhibits THF-independent aldolase activity toward beta-hydroxyamino acids, producing glycine and aldehydes, via a retro-aldol mechanism. In Neisseria meningitidis serogroup C / serotype 2a (strain ATCC 700532 / DSM 15464 / FAM18), this protein is Serine hydroxymethyltransferase.